The following is a 357-amino-acid chain: Protein BMRF2 (357 aa).

The Virion surface portion of the chain corresponds to 1–11; that stretch reads MFSCKQHLSLG. The hydrophobic stretch at 12–32 threads the membrane; sequence ACVFCLGLLASTPFIWCFVFA. At 33-46 the chain is on the intravirion side; it reads NLLSLEIFSPWQTH. Over 47–67 the chain traverses the membrane; sequence VYRLGFPTACLMAVLWTLVPA. Residues 68–70 are Virion surface-facing; it reads KHA. The chain crosses the lipid bilayer at residues 71-91; that stretch reads VRAVTPAIMLNIASALIFFSL. Over 92-98 the chain is Intravirion; the sequence is RVYSTST. The hydrophobic stretch at 99–121 threads the membrane; that stretch reads WVSAPCLFLANLPLLCLWPRLAI. Topologically, residues 122–133 are virion surface; that stretch reads EIVYICPAIHQR. Over 134 to 154 the chain traverses the membrane; it reads FFELGLLLACTIFALSVVSRA. The Intravirion portion of the chain corresponds to 155–158; that stretch reads LEVS. The hydrophobic stretch at 159–179 threads the membrane; that stretch reads AVFMSPFFIFLALGSGSLAGA. The Virion surface portion of the chain corresponds to 180 to 217; sequence RRNQIYTSGLERRRSIFCARGDHSVASLKETLHKCPWD. Positions 199–201 match the Integrin binding site motif; that stretch reads RGD. Positions 218 to 238 form a transmembrane segment; that stretch reads LLAISALTVLVVCVMIVLHVH. The Intravirion segment spans residues 239–240; the sequence is AE. The hydrophobic stretch at 241-261 threads the membrane; sequence VFFGLSRYLPLFLCGAMASGG. Over 262-267 the chain is Virion surface; sequence LYLGHS. The hydrophobic stretch at 268–288 threads the membrane; the sequence is SIIACVMATLCTLSSVVVYFL. The Intravirion segment spans residues 289 to 298; the sequence is HETLGPLGKT. A membrane pass occupies residues 299-319; it reads VLFISIFVYYFSGVAALSAAM. Over 320-335 the chain is Virion surface; the sequence is RYKLKKFVNGPLVHLR. The segment at 336 to 356 is a transmembrane helix; it reads VVYMCCFVFTFCEYLLVTFIK. Position 357 (Ser357) is a topological domain, intravirion.

The protein belongs to the herpesviridae BMRF2 family. In terms of assembly, interacts with BDLF2. Interacts with host beta1 integrin family. Extensively glycosylated by O-linked oligosaccharides.

It is found in the virion membrane. It localises to the host cell membrane. Functionally, facilitates virus attachment to oral epithelial cells by binding to host beta1 integrin family. Participates in rearrangement of cellular actin to increase intercellular contacts by binding BDLF2 and thereby promote virus cell-to-cell spreading. The protein is Protein BMRF2 of Homo sapiens (Human).